The primary structure comprises 542 residues: Probable folate-biopterin transporter 8, chloroplastic (542 aa).

Residues 1–78 (MERIMINPLL…GVSEFEETAR (78 aa)) constitute a chloroplast transit peptide. Positions 24–45 (LSSIHRQQQQQERQSNNNTLFM) are disordered. Transmembrane regions (helical) follow at residues 103–123 (FPWLALNFHMVHSLALQPSTL), 132–152 (LPMVAKPLYGVLSDVLYIGSG), 155–175 (VPYIAIGVFLQVLAWGSMGIF), 181–201 (VLPSLVACVLLSNLGASITEV), 223–243 (ALMASAAGGVLGNLLGGYLLL), 246–266 (PPKISFLVFSALLSLQLVVSL), 308–328 (LIWAVVSIAMVPLLSGSVFCY), 338–358 (SVIGMSKVIGQLMLLCLTVVY), 369–389 (PLIHIIQLLYGLSILLDYILV), 404–424 (VLCFSSLAEILAQFKILPFAV), 446–466 (LCLSQIVSAFLGVGLANLIGI), and 477–497 (GILIQSLAALAPLCFMHLVPM). The interval 506–542 (GKRGISKRSRRNRRVGRVVDKESVTYRRERESEEAQR) is disordered. A compositionally biased stretch (basic residues) spans 509 to 521 (GISKRSRRNRRVG). A compositionally biased stretch (basic and acidic residues) spans 522-542 (RVVDKESVTYRRERESEEAQR).

It belongs to the major facilitator superfamily. Folate-biopterin transporter (TC 2.A.71) family.

Its subcellular location is the plastid. It localises to the chloroplast membrane. Functionally, could mediate folate transport. This Arabidopsis thaliana (Mouse-ear cress) protein is Probable folate-biopterin transporter 8, chloroplastic.